Here is a 648-residue protein sequence, read N- to C-terminus: Phosphatidylinositol-3,5-bisphosphate 3-phosphatase MTMR14 (648 aa).

Residues 1–19 (MAGARAAAAASAGSTASSG) are compositionally biased toward low complexity. The interval 1–27 (MAGARAAAAASAGSTASSGSPPPQEPG) is disordered. Lysine 193 bears the N6-acetyllysine mark. 2 N-linked (GlcNAc...) asparagine glycosylation sites follow: asparagine 225 and asparagine 240. Cysteine 329 serves as the catalytic Phosphocysteine intermediate. Residues glycine 332, tryptophan 333, aspartate 334, arginine 335, and arginine 381 each coordinate a 1,2-diacyl-sn-glycero-3-phospho-(1D-myo-inositol-3,5-bisphosphate). A 1,2-diacyl-sn-glycero-3-phospho-(1D-myo-inositol-3-phosphate) is bound by residues glycine 332, tryptophan 333, aspartate 334, arginine 335, and arginine 381. Positions 471–544 (PTQAAWRKSH…PRSVDHPLPG (74 aa)) are disordered. Basic and acidic residues predominate over residues 494-506 (PSEERLPSHHGLT). Residue serine 516 is modified to Phosphoserine. An N-linked (GlcNAc...) asparagine glycan is attached at asparagine 517. Residues serine 528, serine 578, and serine 622 each carry the phosphoserine modification. Arginine 636 is subject to Omega-N-methylarginine.

This sequence belongs to the protein-tyrosine phosphatase family. Non-receptor class myotubularin subfamily.

It localises to the cytoplasm. The catalysed reaction is a 1,2-diacyl-sn-glycero-3-phospho-(1D-myo-inositol-3,5-bisphosphate) + H2O = a 1,2-diacyl-sn-glycero-3-phospho-(1D-myo-inositol-5-phosphate) + phosphate. It catalyses the reaction a 1,2-diacyl-sn-glycero-3-phospho-(1D-myo-inositol-3-phosphate) + H2O = a 1,2-diacyl-sn-glycero-3-phospho-(1D-myo-inositol) + phosphate. Lipid phosphatase that specifically dephosphorylates the D-3 position of phosphatidylinositol 3-phosphate and phosphatidylinositol 3,5-bisphosphate, generating phosphatidylinositol and phosphatidylinositol 5-phosphate. This is Phosphatidylinositol-3,5-bisphosphate 3-phosphatase MTMR14 from Mus musculus (Mouse).